A 500-amino-acid chain; its full sequence is L-arabinose isomerase (500 aa).

Mn(2+)-binding residues include glutamate 306, glutamate 333, histidine 350, and histidine 450.

It belongs to the arabinose isomerase family. As to quaternary structure, homohexamer. Mn(2+) serves as cofactor.

The enzyme catalyses beta-L-arabinopyranose = L-ribulose. The protein operates within carbohydrate degradation; L-arabinose degradation via L-ribulose; D-xylulose 5-phosphate from L-arabinose (bacterial route): step 1/3. Its function is as follows. Catalyzes the conversion of L-arabinose to L-ribulose. This chain is L-arabinose isomerase, found in Shigella dysenteriae serotype 1 (strain Sd197).